The primary structure comprises 427 residues: Trigger factor (427 aa).

A PPIase FKBP-type domain is found at 163–248 (GDTVILDFEG…LHEIKTKEVP (86 aa)).

Belongs to the FKBP-type PPIase family. Tig subfamily.

It is found in the cytoplasm. It carries out the reaction [protein]-peptidylproline (omega=180) = [protein]-peptidylproline (omega=0). In terms of biological role, involved in protein export. Acts as a chaperone by maintaining the newly synthesized protein in an open conformation. Functions as a peptidyl-prolyl cis-trans isomerase. The polypeptide is Trigger factor (Listeria welshimeri serovar 6b (strain ATCC 35897 / DSM 20650 / CCUG 15529 / CIP 8149 / NCTC 11857 / SLCC 5334 / V8)).